A 237-amino-acid polypeptide reads, in one-letter code: Concanavalin-A (237 aa).

Mn(2+) contacts are provided by Glu-8 and Asp-10. Asp-10, Tyr-12, Asn-14, and Asp-19 together coordinate Ca(2+). Tyr-12 serves as a coordination point for a carbohydrate. Mn(2+)-binding residues include Asp-19 and His-24. Residue 99-100 (LY) coordinates a carbohydrate. Asp-208 provides a ligand contact to Ca(2+). Arg-228 provides a ligand contact to a carbohydrate.

Belongs to the leguminous lectin family. Homotetramer.

Its function is as follows. Glucose/D-mannose specific lectin. The polypeptide is Concanavalin-A (Canavalia lineata (Beach bean)).